The sequence spans 291 residues: Tryptophan synthase alpha chain (291 aa).

Catalysis depends on proton acceptor residues E69 and D80.

Belongs to the TrpA family. In terms of assembly, tetramer of two alpha and two beta chains.

It catalyses the reaction (1S,2R)-1-C-(indol-3-yl)glycerol 3-phosphate + L-serine = D-glyceraldehyde 3-phosphate + L-tryptophan + H2O. It functions in the pathway amino-acid biosynthesis; L-tryptophan biosynthesis; L-tryptophan from chorismate: step 5/5. The alpha subunit is responsible for the aldol cleavage of indoleglycerol phosphate to indole and glyceraldehyde 3-phosphate. In Bifidobacterium longum (strain NCC 2705), this protein is Tryptophan synthase alpha chain.